We begin with the raw amino-acid sequence, 727 residues long: Broad-complex core protein isoforms 1/2/3/4/5 (727 aa).

In terms of domain architecture, BTB spans 32-97 (VDVTLACEGR…IYHGEVNVHQ (66 aa)). Polar residues predominate over residues 135–149 (NSGGRTPLNTHTQSL). Disordered stretches follow at residues 135-185 (NSGG…SLPS), 218-378 (RGSD…IGDG), 445-496 (INNS…RPTA), 532-583 (PQQQ…ANTP), and 604-626 (STSG…SGGL). Residues 227–238 (SGAVGSGSNNNS) show a composition bias toward low complexity. Over residues 281–298 (TGNGNSGNGNGNGNGASN) the composition is skewed to gly residues. Residues 341–355 (NDEHSNDSTGEHDAN) are compositionally biased toward basic and acidic residues. 3 stretches are compositionally biased toward low complexity: residues 445–460 (INNS…NNNN), 475–495 (TPSP…TRPT), and 533–568 (QQQQ…QQQQ). 2 C2H2-type zinc fingers span residues 636–659 (FRCN…QNVH) and 666–689 (PVCN…SIYH). The segment at 694 to 727 (QPKQEPGVGATQAAANSFYHQQHQQQQLNHHSSS) is disordered. Residues 713-727 (HQQHQQQQLNHHSSS) are compositionally biased toward low complexity.

The protein resides in the nucleus. Functionally, broad-complex proteins are required for puffing and transcription of salivary gland late genes during metamorphosis. The chain is Broad-complex core protein isoforms 1/2/3/4/5 (br) from Drosophila melanogaster (Fruit fly).